Here is a 2561-residue protein sequence, read N- to C-terminus: MSEHTYSLTHAQRRVWFTELLEPDTSICNLTACVKFKGNIELDTLEGALNHSISRNDAIRFQLLEGEELEPRLHLTEYKYYPLRIIDFSNVEMIEIEQWIQDQASIPFKLFNSPLFQFYLLRIDSHEVWLFAKFHHIIMDGISLNVMGNQIIDLYQKMKKKDPLPDQPEPSYLSYIEKESQYLQSPRFAKDRLFWTQTFEHPLEYHSLADQTSLQKQSTSASRDTIILSPDLEQTIRIFCEEHKINIISLFMASFYICISRITSKKDLAIGTYYGNRGSKAEKEMLGMFVSSLPIRITVDPDTDFLSFVRTIGREQLSVMRHQRFPYNLLVNELRNEQKDLHNLIGISMQYQPLQWHNADDFDYETALYFSGYTANELSVQIQERIDNGTIQLNFDYQNTLFSLEDIKRIQSHLLTILENALKHPHSFIRELDMTNTREKQKLLYEFNKTEAVSPKAFTLHGLFERQAAFTPERLAIRFSGGSLTYAELDMYASRLAAHLAARGVTNESIVGVLSERSPDMLIAVLAVLKAGGAYLPLDPAYPKERLSYMLKDSGASLLLTQPGCSAPNFSGETLEVDMTSLASEKAENHEFTPADGGSLAYVIYTSGSTGQPKGVAVEHRQAVSFLTGMQHQFPLSEDDIVMVKTSFSFDASVWQLFWWSLSGASAYLLPPGWEKDSALIVQAIHQENVTTAHFIPAMLNSFLDQAEIERLSDRTSLKRVFAGGEPLAPRTAARFASVLPQVSLIHGYGPTEATVDAAFYVLDPERDRDRLRIPIGKPVPGARLYVLDPHLAVQPSGVAGELYIAGAGVARGYLNRPALTEERFLEDPFYPGERMYKTGDVARWLPDGNVEFLGRTDDQVKIRGYRIEPGEIEAALRSIEGVREAAVTVRTDSGEPELCAYVEGLQRNEVRAQLERLLPGYMVPAYMIEMEQWPVTPSGKLDRNALPAPGGAADAETYTAPRNVTEMKLSQLWEDVLKNGPVGIHDNFFDRGGHSLKATALVSRIAKEFDVQVPLKDVFAHPTVEGLATVIREGTDSPYEAIKPAEKQETYPVSSAQKRIYVLQQLEDGGTGYNMPAVLELEGKLNPERMERAFKELIKRHESLRTSFEQDAGGDPVQRIHDEVPFTLQTTVLGERTEQEAAAAFIKPFDLSQAPLFRAQIVKISDERHLLLVDMHHIISDGVSVNILIREFGELYNNRNLPALRIQYKDYAVWREGFKTGDAYKTQEAYWLKQLEGELPVLDLPADHARPPVRSFAGDKVSFTLDQEVASGLHKLARENGSTLYMVLLAAYTAFLSRLSGQEDIIVGSPIAGRPHKDLEPILGMFVNTLALRTRPEGGKPFVQYLQEVRETALEAFEHQDYPFEELVDKLELTRDMSRNPVFDAMFILQNVEKQDIDLREIKVRPANFAHHISLFDITLIATEISGSICCEMEFSTEVFLKATIERWADHFIEFLHEALSTPETSLAQINILSDKEKQKIVFEFNKTQVEFAQKDIPFHRIFEAKAEENPEHIAVIDNETEISYRLLNERANRLARTLQNRKGPKPTVAVLAKRSIDAIVGVLAVMKAGGVYIPIDAHYPKARIEYILRDSGADILLLQRELKHLISNSPESEMSHIFLDDEGSFEESNCNLNLSPAPEEPVYIIYTSGTTGAPKGVIVTYQNFTHAALAWRQIYELDRKPVRLLQIASFSFDVFSGDLARTLTNGGTLIVCPDETRLEPAEIYKIIKSQRITVMESTPALIIPVMEYVYRNQFKLPDLDILILGSDMVKAQDFKTLTDRFGQSMRIINSYGVTEATIDSSFYETSMGGECTGDNVPIGSPLPNVHMYVLSQTDQIQPIGVAGELCIGGAGVAKGYHHKPDLTQMKFTENPFVSGERLYRTGDRACWLPNGTIRLLGRMDYQVKINGYRIETEEIESVLLQTGLVREAAVAVQHDKNGQAGLAAYIVPSDVNTNALRAALTKELPAYMIPAYLIPLVNMPLTLNGKLDRNALPAPNNVLSRPYTAPVNDLQKTMAYIWEDVLSMSRVGIHDSFFELGGDSIKALQVAARLAAEGWSMTIRDLFRYSTIQELCGHITPLASQADQGPAEGEAELTPIQRRFFGQVHAFHYHYNQSVMLFSEKGFNANALHLALRKITEHHDAIRMIFQRDQNGHVIQFNRGINHKDHELFGLYISDWTKASLERAHLDEKLAAEETVIQSKMNVEKGPLLQAGLFKTAEGDHLLIALHHLVIDGVSWRILLEDLAAAYQQALEKKEIQLPPKTDSYLSYADGLTQIAESKQLLSEKTYWQTILDAHTAFLPKDIENVPDKLQMNSDAAAFVLSGDWTEKLLFETQQAYGTDANELLLTALGMALSEWTGHDQIVISTEGHGREGHVPNIDISRTVGWFTSIYPILLDMGIPEPFEDQLAYRIKTTKDMLRRVPNKGTGYGLLTHIGELRHKEPEVSFNYLGQFSEEKEVETFQLSYYQPRYEIAGEREREYELDINALITDGRLHVKAVYTQVFSKHSIECFMDRFHRHLIETIEHCSQKKAREKTLSDFSNKELTLSALSSIEDLVKDL.

Positions 1 to 1038 (MSEHTYSLTH…ATVIREGTDS (1038 aa)) are domain 1 (glutamate-activating). Residues 2 to 300 (SEHTYSLTHA…SSLPIRITVD (299 aa)) form a condensation 1 region. Positions 485–888 (TYAELDMYAS…SIEGVREAAV (404 aa)) are adenylation 1. Residues 961–1036 (APRNVTEMKL…GLATVIREGT (76 aa)) enclose the Carrier 1 domain. Ser996 is subject to O-(pantetheine 4'-phosphoryl)serine. A condensation 2 region spans residues 1048–1338 (KQETYPVSSA…NTLALRTRPE (291 aa)). Positions 1048 to 2554 (KQETYPVSSA…ELTLSALSSI (1507 aa)) are domain 2 (D-ornithine-activating). An adenylation 2 region spans residues 1525–1932 (SYRLLNERAN…QTGLVREAAV (408 aa)). The Carrier 2 domain maps to 2007–2081 (APVNDLQKTM…ELCGHITPLA (75 aa)). Ser2042 bears the O-(pantetheine 4'-phosphoryl)serine mark. Positions 2089–2554 (AEGEAELTPI…ELTLSALSSI (466 aa)) are epimerization.

Belongs to the ATP-dependent AMP-binding enzyme family. Requires pantetheine 4'-phosphate as cofactor.

Functionally, this protein is a multifunctional enzyme, able to activate and polymerize the amino acids Glu and Orn as part of the biosynthesis of the lipopeptide antibiotic lipastatin. The Orn residue is further epimerized to the D-isomer form. The activation sites for these amino acids consist of individual domains. In Bacillus subtilis (strain 168), this protein is Plipastatin synthase subunit A (ppsA).